The following is a 689-amino-acid chain: Glycine--tRNA ligase beta subunit (689 aa).

It belongs to the class-II aminoacyl-tRNA synthetase family. Tetramer of two alpha and two beta subunits.

It localises to the cytoplasm. It catalyses the reaction tRNA(Gly) + glycine + ATP = glycyl-tRNA(Gly) + AMP + diphosphate. The polypeptide is Glycine--tRNA ligase beta subunit (glyS) (Coxiella burnetii (strain RSA 493 / Nine Mile phase I)).